A 206-amino-acid chain; its full sequence is Protein GrpE (206 aa).

Residues 1 to 15 show a composition bias toward polar residues; it reads MTDSNGQKDNNQDQA. Residues 1-38 form a disordered region; sequence MTDSNGQKDNNQDQAQPADPVVSKPYIMPDDPEEGTNE.

This sequence belongs to the GrpE family. As to quaternary structure, homodimer.

It is found in the cytoplasm. In terms of biological role, participates actively in the response to hyperosmotic and heat shock by preventing the aggregation of stress-denatured proteins, in association with DnaK and GrpE. It is the nucleotide exchange factor for DnaK and may function as a thermosensor. Unfolded proteins bind initially to DnaJ; upon interaction with the DnaJ-bound protein, DnaK hydrolyzes its bound ATP, resulting in the formation of a stable complex. GrpE releases ADP from DnaK; ATP binding to DnaK triggers the release of the substrate protein, thus completing the reaction cycle. Several rounds of ATP-dependent interactions between DnaJ, DnaK and GrpE are required for fully efficient folding. The chain is Protein GrpE from Rhodopseudomonas palustris (strain BisB5).